Here is a 132-residue protein sequence, read N- to C-terminus: ATP synthase epsilon chain (132 aa).

This sequence belongs to the ATPase epsilon chain family. F-type ATPases have 2 components, CF(1) - the catalytic core - and CF(0) - the membrane proton channel. CF(1) has five subunits: alpha(3), beta(3), gamma(1), delta(1), epsilon(1). CF(0) has three main subunits: a, b and c.

It localises to the cell inner membrane. In terms of biological role, produces ATP from ADP in the presence of a proton gradient across the membrane. The sequence is that of ATP synthase epsilon chain from Parvibaculum lavamentivorans (strain DS-1 / DSM 13023 / NCIMB 13966).